Consider the following 202-residue polypeptide: Small ribosomal subunit protein uS4 (202 aa).

Positions 94 to 157 constitute an S4 RNA-binding domain; the sequence is SRLDSLVYRA…LEMPLIKNTL (64 aa).

This sequence belongs to the universal ribosomal protein uS4 family. As to quaternary structure, part of the 30S ribosomal subunit. Contacts protein S5. The interaction surface between S4 and S5 is involved in control of translational fidelity.

Its function is as follows. One of the primary rRNA binding proteins, it binds directly to 16S rRNA where it nucleates assembly of the body of the 30S subunit. Functionally, with S5 and S12 plays an important role in translational accuracy. The chain is Small ribosomal subunit protein uS4 from Ureaplasma urealyticum serovar 10 (strain ATCC 33699 / Western).